Here is a 787-residue protein sequence, read N- to C-terminus: Filamentous growth regulator 27 (787 aa).

The tract at residues 1–22 (MSAPIVETKKASKRRIRRIPDD) is disordered. The segment at residues 31 to 57 (CDNCKKRKFKCSGEKPCFECSKKGHDC) is a DNA-binding region (zn(2)-C6 fungal-type). Residues 69 to 97 (GERMAKLKQKKDNNEKQRELVNEQIAQSS) are a coiled coil. 2 disordered regions span residues 120-140 (SSHS…SSIP) and 200-221 (RHKS…KGGI). Positions 209 to 221 (DNNTNNVPKKGGI) are enriched in polar residues.

Its subcellular location is the nucleus. Transcription factor involved in yeast cell adherence to silicone substrate, filamentous growth, and biofilm formation. This Candida albicans (strain SC5314 / ATCC MYA-2876) (Yeast) protein is Filamentous growth regulator 27 (FGR27).